The sequence spans 437 residues: Serine hydroxymethyltransferase (437 aa).

(6S)-5,6,7,8-tetrahydrofolate-binding positions include leucine 130 and 134 to 136; that span reads GHL. Position 239 is an N6-(pyridoxal phosphate)lysine (lysine 239).

The protein belongs to the SHMT family. As to quaternary structure, homodimer. Requires pyridoxal 5'-phosphate as cofactor.

Its subcellular location is the cytoplasm. The enzyme catalyses (6R)-5,10-methylene-5,6,7,8-tetrahydrofolate + glycine + H2O = (6S)-5,6,7,8-tetrahydrofolate + L-serine. The protein operates within one-carbon metabolism; tetrahydrofolate interconversion. It functions in the pathway amino-acid biosynthesis; glycine biosynthesis; glycine from L-serine: step 1/1. Functionally, catalyzes the reversible interconversion of serine and glycine with tetrahydrofolate (THF) serving as the one-carbon carrier. This reaction serves as the major source of one-carbon groups required for the biosynthesis of purines, thymidylate, methionine, and other important biomolecules. Also exhibits THF-independent aldolase activity toward beta-hydroxyamino acids, producing glycine and aldehydes, via a retro-aldol mechanism. This chain is Serine hydroxymethyltransferase, found in Bartonella tribocorum (strain CIP 105476 / IBS 506).